The sequence spans 212 residues: Peptide methionine sulfoxide reductase MsrA (212 aa).

Residue Cys52 is part of the active site.

The protein belongs to the MsrA Met sulfoxide reductase family.

It catalyses the reaction L-methionyl-[protein] + [thioredoxin]-disulfide + H2O = L-methionyl-(S)-S-oxide-[protein] + [thioredoxin]-dithiol. The catalysed reaction is [thioredoxin]-disulfide + L-methionine + H2O = L-methionine (S)-S-oxide + [thioredoxin]-dithiol. Functionally, has an important function as a repair enzyme for proteins that have been inactivated by oxidation. Catalyzes the reversible oxidation-reduction of methionine sulfoxide in proteins to methionine. This is Peptide methionine sulfoxide reductase MsrA from Salmonella paratyphi A (strain AKU_12601).